The sequence spans 296 residues: MNKEQLEKMKNGKGFIAALDQSGGSTPKALKEYGVNEDQYSNEDEMFQLVHDMRTRVVTSPSFSPDKILGAILFEQTMDREVESKYTADYLADKGVVPFLKVDKGLAEEQNGVQLMKPIDNLDNLLDRANERHIFGTKMRSNILELNEQGIKDVVEQQFEVAKQIIAKGLVPIIEPEVNINAKDKAEIEKVLKAELKKGLDSLNADQLVMLKLTIPTEPNLYKELAEHPNVVRVVVLSGGYSREKANELLKDNAELIASFSRALASDLRADQSKEEFDKALGDAVESIYDASVNKN.

Glutamate 175 acts as the Proton acceptor in catalysis. The active-site Schiff-base intermediate with dihydroxyacetone-P is the lysine 212.

The protein belongs to the class I fructose-bisphosphate aldolase family.

It catalyses the reaction beta-D-fructose 1,6-bisphosphate = D-glyceraldehyde 3-phosphate + dihydroxyacetone phosphate. It functions in the pathway carbohydrate degradation; glycolysis; D-glyceraldehyde 3-phosphate and glycerone phosphate from D-glucose: step 4/4. The chain is Fructose-bisphosphate aldolase class 1 from Staphylococcus aureus (strain USA300).